The primary structure comprises 204 residues: Lipoprotein signal peptidase (204 aa).

The segment at 1–42 (MAEAERIIGTPDIPDAAGEGQERPDADPEREQQEQEQAPERT) is disordered. Basic and acidic residues predominate over residues 20 to 42 (GQERPDADPEREQQEQEQAPERT). 3 helical membrane passes run 50–70 (VLFA…MLVV), 100–120 (FGEA…VVIA), and 126–146 (LHSL…LGNL). Catalysis depends on residues Asp163 and Asp177. Residues 170–190 (FAVFNLADSAIVCGGILIVIL) form a helical membrane-spanning segment.

It belongs to the peptidase A8 family.

It is found in the cell membrane. The enzyme catalyses Release of signal peptides from bacterial membrane prolipoproteins. Hydrolyzes -Xaa-Yaa-Zaa-|-(S,diacylglyceryl)Cys-, in which Xaa is hydrophobic (preferably Leu), and Yaa (Ala or Ser) and Zaa (Gly or Ala) have small, neutral side chains.. It functions in the pathway protein modification; lipoprotein biosynthesis (signal peptide cleavage). In terms of biological role, this protein specifically catalyzes the removal of signal peptides from prolipoproteins. In Streptomyces coelicolor (strain ATCC BAA-471 / A3(2) / M145), this protein is Lipoprotein signal peptidase.